The sequence spans 110 residues: Multidrug transporter PA4990 (110 aa).

4 helical membrane-spanning segments follow: residues 7–27 (LAIAIAAEVVATTSLKAVAGF), 31–51 (LPLLLVVGGYVLAFSMLVLVM), 58–78 (VVYAIWSGLGIVLVSLVAMFV), and 85–105 (PAALLGIGLIIAGVLVIQLFS).

It belongs to the drug/metabolite transporter (DMT) superfamily. Small multidrug resistance (SMR) (TC 2.A.7.1) family.

The protein resides in the cell membrane. Confers resistance to ethidium bromide, acriflavine and methyl viologen. This Pseudomonas aeruginosa (strain ATCC 15692 / DSM 22644 / CIP 104116 / JCM 14847 / LMG 12228 / 1C / PRS 101 / PAO1) protein is Multidrug transporter PA4990.